Consider the following 234-residue polypeptide: Sugar fermentation stimulation protein homolog (234 aa).

Belongs to the SfsA family.

The polypeptide is Sugar fermentation stimulation protein homolog (Idiomarina loihiensis (strain ATCC BAA-735 / DSM 15497 / L2-TR)).